The sequence spans 84 residues: U8-theraphotoxin-Hhn1a (84 aa).

Positions 1–21 (MKVVLLECLVWMMAMMELVSC) are cleaved as a signal peptide. 5 disulfides stabilise this stretch: Cys23/Cys35, Cys29/Cys44, Cys34/Cys67, Cys54/Cys75, and Cys69/Cys81.

The protein belongs to the AVIT (prokineticin) family. As to expression, expressed by the venom gland.

The protein resides in the secreted. This is U8-theraphotoxin-Hhn1a from Cyriopagopus hainanus (Chinese bird spider).